Reading from the N-terminus, the 433-residue chain is Serine--tRNA ligase (433 aa).

235 to 237 (TSE) is a binding site for L-serine. 266-268 (RSE) lines the ATP pocket. E289 provides a ligand contact to L-serine. 353-356 (EISS) lines the ATP pocket. An L-serine-binding site is contributed by S388.

This sequence belongs to the class-II aminoacyl-tRNA synthetase family. Type-1 seryl-tRNA synthetase subfamily. In terms of assembly, homodimer. The tRNA molecule binds across the dimer.

It is found in the cytoplasm. The enzyme catalyses tRNA(Ser) + L-serine + ATP = L-seryl-tRNA(Ser) + AMP + diphosphate + H(+). It catalyses the reaction tRNA(Sec) + L-serine + ATP = L-seryl-tRNA(Sec) + AMP + diphosphate + H(+). It functions in the pathway aminoacyl-tRNA biosynthesis; selenocysteinyl-tRNA(Sec) biosynthesis; L-seryl-tRNA(Sec) from L-serine and tRNA(Sec): step 1/1. Functionally, catalyzes the attachment of serine to tRNA(Ser). Is also able to aminoacylate tRNA(Sec) with serine, to form the misacylated tRNA L-seryl-tRNA(Sec), which will be further converted into selenocysteinyl-tRNA(Sec). The polypeptide is Serine--tRNA ligase (Burkholderia cepacia (Pseudomonas cepacia)).